A 209-amino-acid chain; its full sequence is Large ribosomal subunit protein uL3 (209 aa).

Residue Q150 is modified to N5-methylglutamine.

Belongs to the universal ribosomal protein uL3 family. As to quaternary structure, part of the 50S ribosomal subunit. Forms a cluster with proteins L14 and L19. Post-translationally, methylated by PrmB.

One of the primary rRNA binding proteins, it binds directly near the 3'-end of the 23S rRNA, where it nucleates assembly of the 50S subunit. The polypeptide is Large ribosomal subunit protein uL3 (Vibrio campbellii (strain ATCC BAA-1116)).